Consider the following 477-residue polypeptide: Ribulose bisphosphate carboxylase large chain (477 aa).

Residues 1–2 (MS) constitute a propeptide that is removed on maturation. Proline 3 bears the N-acetylproline mark. Position 14 is an N6,N6,N6-trimethyllysine (lysine 14). Residues asparagine 123 and threonine 173 each coordinate substrate. The active-site Proton acceptor is the lysine 175. Position 177 (lysine 177) interacts with substrate. Lysine 201, aspartate 203, and glutamate 204 together coordinate Mg(2+). Lysine 201 carries the post-translational modification N6-carboxylysine. Residue histidine 294 is the Proton acceptor of the active site. The substrate site is built by arginine 295, histidine 327, and serine 379.

It belongs to the RuBisCO large chain family. Type I subfamily. In terms of assembly, heterohexadecamer of 8 large chains and 8 small chains; disulfide-linked. The disulfide link is formed within the large subunit homodimers. It depends on Mg(2+) as a cofactor. Post-translationally, the disulfide bond which can form in the large chain dimeric partners within the hexadecamer appears to be associated with oxidative stress and protein turnover.

The protein localises to the plastid. It is found in the chloroplast. It catalyses the reaction 2 (2R)-3-phosphoglycerate + 2 H(+) = D-ribulose 1,5-bisphosphate + CO2 + H2O. The catalysed reaction is D-ribulose 1,5-bisphosphate + O2 = 2-phosphoglycolate + (2R)-3-phosphoglycerate + 2 H(+). RuBisCO catalyzes two reactions: the carboxylation of D-ribulose 1,5-bisphosphate, the primary event in carbon dioxide fixation, as well as the oxidative fragmentation of the pentose substrate in the photorespiration process. Both reactions occur simultaneously and in competition at the same active site. This chain is Ribulose bisphosphate carboxylase large chain, found in Nicotiana sylvestris (Wood tobacco).